The sequence spans 498 residues: Guanosine-5'-triphosphate,3'-diphosphate pyrophosphatase (498 aa).

The protein belongs to the GppA/Ppx family. GppA subfamily.

It carries out the reaction guanosine 3'-diphosphate 5'-triphosphate + H2O = guanosine 3',5'-bis(diphosphate) + phosphate + H(+). It participates in purine metabolism; ppGpp biosynthesis; ppGpp from GTP: step 2/2. In terms of biological role, catalyzes the conversion of pppGpp to ppGpp. Guanosine pentaphosphate (pppGpp) is a cytoplasmic signaling molecule which together with ppGpp controls the 'stringent response', an adaptive process that allows bacteria to respond to amino acid starvation, resulting in the coordinated regulation of numerous cellular activities. The protein is Guanosine-5'-triphosphate,3'-diphosphate pyrophosphatase of Yersinia pseudotuberculosis serotype O:1b (strain IP 31758).